Here is a 532-residue protein sequence, read N- to C-terminus: MKNIYSLFLLFALISATFANNAFIVHWNSDSISKKLTGQIGDTISFYTSDGNSHDVKSSDGSVSSSVFSGSLTNPGIFKVTLTKEGNIEFTSSYDEGLSATIVVSSGGQIPITTTSSTTTDGSSTPSTPTSTTSASTTTSGGSATTTTGEPITDGSNGGASSTTGNSGTTGSATTTTSSSSDNSDGSVGTSTTTSPAITTSSGSIIDPTSPPTTDSSSNSGGYGSSSSIENGVECLLTITQDAFDSWTYDNIIYTVYQVNLTNIGTLSVESVILTPNDNSLIYHTWELVYDGTSLTLPTYRKAGPINPEETIIFGYISRNSTDVTFALSPTCSDSSSPTPTPTETPTETPTETPTETPTETPTETPTETPTETETPTPTPSSSSSDVDSGSSSEIETPTPTETDTPTPTPSSSSSEGSGSSSETQPPITPPPTTGTSCLAQVQQKVINSWINGEVDHYIQVEATIVNQGSTPISSFNFYSDAEQIWSVEKTGTNTYKLPSWFSTIPVGGSHTFGYIVKSAELSDLEGVQYTC.

Disordered regions lie at residues 113–225 (TTTS…GYGS) and 328–436 (LSPT…TTGT). The segment covering 329–426 (SPTCSDSSSP…GSGSSSETQP (98 aa)) has biased composition (low complexity). Tandem repeats lie at residues 339 to 342 (TPTP), 343 to 346 (TETP), 347 to 350 (TETP), 351 to 354 (TETP), 355 to 358 (TETP), 359 to 362 (TETP), 363 to 366 (TETP), 367 to 370 (TETP), 371 to 374 (TETE), 375 to 378 (TPTP), 397 to 400 (TPTP), 401 to 404 (TETD), and 405 to 408 (TPTP). The 10 X 4 AA tandem repeats of T-[EP]-T-[EP] stretch occupies residues 339–378 (TPTPTETPTETPTETPTETPTETPTETPTETPTETETPTP). The 3 X 4 AA tandem repeats of T-[EP]-T-[PD] stretch occupies residues 397–408 (TPTPTETDTPTP).

The polypeptide is Spore germination protein 270-11 (celB) (Dictyostelium discoideum (Social amoeba)).